The following is a 322-amino-acid chain: Transcription factor IIIA (322 aa).

9 C2H2-type zinc fingers span residues 12 to 36 (FVCS…YCKH), 42 to 64 (FACD…NLSH), 70 to 95 (YQCL…ERVH), 102 to 126 (YVCD…KCEH), 132 to 156 (FECQ…EKVH), 159 to 184 (YPCA…KAAH), 188 to 211 (LQCD…LFVH), 218 to 243 (FKCT…LSFH), and 249 to 273 (FICP…AVVH). Positions 272–322 (VHDPQKKKLQKKTKRGRKKKLEPKTNVSDDSELPAQLHGLSLNTSTSQNNP) are disordered. A compositionally biased stretch (basic residues) spans 278 to 292 (KKLQKKTKRGRKKKL). Residues 312 to 322 (SLNTSTSQNNP) show a composition bias toward polar residues.

It is found in the nucleus. Involved in ribosomal large subunit biogenesis. Interacts with the internal control region (ICR) of approximately 50 bases within the 5S RNA genes, is required for correct transcription of these genes by RNA polymerase III. Also binds the transcribed 5S RNA's. The sequence is that of Transcription factor IIIA (gtf3a) from Ictalurus punctatus (Channel catfish).